Consider the following 576-residue polypeptide: Nuclear receptor subfamily 1 group D member 2 (576 aa).

Residues M1–I60 form a required for phosphorylation by CSNK1E and cytoplasmic localization region. The segment at M1 to M99 is modulating. A compositionally biased stretch (low complexity) spans S13 to S47. A disordered region spans residues S13 to H90. Position 46 is a phosphoserine; by GSK3-beta (S46). Positions V100–F176 form a DNA-binding region, nuclear receptor. 2 consecutive NR C4-type zinc fingers follow at residues C103 to C123 and C140 to C164. K162 and K163 each carry N6-acetyllysine; by KAT5. Disordered regions lie at residues Q215–A246 and L263–E282. Basic and acidic residues-rich tracts occupy residues L227–N237 and L263–S272. Intrachain disulfides connect C334/C340 and C371/C381. The 211-residue stretch at R366–P576 folds into the NR LBD domain. The heme site is built by C381 and H565. Residues S394–P576 form an interaction with ZNHIT1 region.

Belongs to the nuclear hormone receptor family. NR1 subfamily. Binds DNA as a monomer or a homodimer. Interacts with NCOA5 coactivator, leading to a strong increase of transcription of target genes. Interacts (via N-terminus) with KAT5. Interacts (via C-terminus) with HDAC1. Interacts with ZNHIT1. Interacts with SIAH2. Post-translationally, deacetylated by HDAC1. Acetylation and deacetylation regulate its transcriptional regulatory activity. Under more reducing intracellular redox conditions, Cys-381 is in its heme-bound state, which is optimal for recruitment of the NCOR1/HDAC3 corepressor complex and repression of target genes. When subjected to oxidative stress conditions, Cys-381 undergoes oxidation to form a disulfide bridge with Cys-371, also triggering a ligand switch that results in release of bound heme and derepression of target genes. In terms of processing, ubiquitinated by SIAH2; leading to its proteasomal degradation. Post-translationally, phosphorylated by CSNK1E; phosphorylation enhances its cytoplasmic localization. As to expression, ubiquitous. Expressed abundantly in skeletal muscle and brown adipose tissue. Expressed during skeletal muscle myogenesis.

Its subcellular location is the nucleus. It is found in the cytoplasm. With respect to regulation, the heme-bound form can bind gaseous signaling molecules such as CO and nitric oxide (NO) and NO can reverse its transcriptional repressor activity. In terms of biological role, transcriptional repressor which coordinates circadian rhythm and metabolic pathways in a heme-dependent manner. Integral component of the complex transcription machinery that governs circadian rhythmicity and forms a critical negative limb of the circadian clock by directly repressing the expression of core clock components BMAL1 and CLOCK. Also regulates genes involved in metabolic functions, including lipid metabolism and the inflammatory response. Acts as a receptor for heme which stimulates its interaction with the NCOR1/HDAC3 corepressor complex, enhancing transcriptional repression. Recognizes two classes of DNA response elements within the promoter of its target genes and can bind to DNA as either monomers or homodimers, depending on the nature of the response element. Binds as a monomer to a response element composed of the consensus half-site motif 5'-[A/G]GGTCA-3' preceded by an A/T-rich 5' sequence (RevRE), or as a homodimer to a direct repeat of the core motif spaced by two nuclegotides (RevDR-2). Acts as a potent competitive repressor of ROR alpha (RORA) function and also negatively regulates the expression of NR1D1. Regulates lipid and energy homeostasis in the skeletal muscle via repression of genes involved in lipid metabolism and myogenesis including: CD36, FABP3, FABP4, UCP3, SCD1 and MSTN. Regulates hepatic lipid metabolism via the repression of APOC3. Represses gene expression at a distance in macrophages by inhibiting the transcription of enhancer-derived RNAs (eRNAs). In addition to its activity as a repressor, can also act as a transcriptional activator. Acts as a transcriptional activator of the sterol regulatory element-binding protein 1 (SREBF1) and the inflammatory mediator interleukin-6 (IL6) in the skeletal muscle. Plays a role in the regulation of circadian sleep/wake cycle; essential for maintaining wakefulness during the dark phase or active period. Key regulator of skeletal muscle mitochondrial function; negatively regulates the skeletal muscle expression of core clock genes and genes involved in mitochondrial biogenesis, fatty acid beta-oxidation and lipid metabolism. May play a role in the circadian control of neutrophilic inflammation in the lung. The polypeptide is Nuclear receptor subfamily 1 group D member 2 (Mus musculus (Mouse)).